Reading from the N-terminus, the 447-residue chain is Cytochrome c biogenesis protein CcsB (447 aa).

A run of 3 helical transmembrane segments spans residues 28–48, 87–107, and 173–193; these read LRLA…GTVI, TWWY…CTFR, and IGPI…IWGA.

Belongs to the Ccs1/CcsB family. May interact with CcsA.

The protein resides in the cellular thylakoid membrane. Its function is as follows. Required during biogenesis of c-type cytochromes (cytochrome c6 and cytochrome f) at the step of heme attachment. In Microcystis aeruginosa (strain NIES-843 / IAM M-2473), this protein is Cytochrome c biogenesis protein CcsB.